Here is a 623-residue protein sequence, read N- to C-terminus: Leucine-rich repeat, immunoglobulin-like domain and transmembrane domain-containing protein 1 (623 aa).

A signal peptide spans 1–21 (MWVALGMLWLLALGGPHQAWS). In terms of domain architecture, LRRNT spans 22–59 (FCPSQCSCSLHILSDGSKARTVVCSDPDLTLPPASIPP). At 22-526 (FCPSQCSCSL…EVVDAEGTQR (505 aa)) the chain is on the lumenal side. LRR repeat units lie at residues 60 to 81 (DTCK…TFRP), 84 to 105 (RLEQ…MLRG), 108 to 128 (RLRE…AALK), 132 to 153 (QLQL…AVHF), and 156 to 177 (NLTF…LLDT). Asn156 is a glycosylation site (N-linked (GlcNAc...) asparagine). In terms of domain architecture, LRRCT spans 201–253 (NPWVCDCRLYDLVHLLDGWASNLIFIEARLRCGSPRSLAGVAFSQLELRKCQS). Residues 266–332 (PLGSTVLLRC…SGDYICQAKN (67 aa)) enclose the Ig-like C2-type domain. Cys275 and Cys328 are joined by a disulfide. Asn296 and Asn455 each carry an N-linked (GlcNAc...) asparagine glycan. The 89-residue stretch at 430 to 518 (MVRSLKVVGD…QCVIFSTDEV (89 aa)) folds into the Fibronectin type-III domain. An LRR 6 repeat occupies 525-548 (QRLINMVVISVAAIIALPPTLLVC). A helical membrane pass occupies residues 527-547 (LINMVVISVAAIIALPPTLLV). Over 548–623 (CCGALRRRCH…GGRRINEYFC (76 aa)) the chain is Cytoplasmic.

Homodimer. Interacts with LRIT2; may form a heterodimer with LRIT2. Interacts (via its N-terminal extracellular domain) with metabotropic glutamate receptor GRM6. Interacts (via its extreme C-terminus) with the scaffold protein FRMPD2 (via the third PDZ domain); the interaction leads to their colocalization in photoreceptor synapses. In terms of tissue distribution, retina, outer segments of photoreceptor cells.

It is found in the endoplasmic reticulum membrane. It localises to the cell projection. Its subcellular location is the dendrite. Photoreceptor synaptic protein essential for normal vision. Involved in synapse formation in cone photoreceptor cells. The chain is Leucine-rich repeat, immunoglobulin-like domain and transmembrane domain-containing protein 1 (Lrit1) from Rattus norvegicus (Rat).